The sequence spans 895 residues: Plasma membrane ATPase 1 (895 aa).

Residues 1-53 are disordered; the sequence is MSATEPTNEKVDKIVSDDEDEDIDQLVADLQSNPGAGDEEEEEENDSSFKAVP. Over 1 to 92 the chain is Cytoplasmic; it reads MSATEPTNEK…AEEQENLVLK (92 aa). A compositionally biased stretch (basic and acidic residues) spans 7-16; sequence TNEKVDKIVS. A compositionally biased stretch (acidic residues) spans 37–46; that stretch reads GDEEEEEEND. The chain crosses the membrane as a helical span at residues 93 to 113; the sequence is FVMFFVGPIQFVMEAAAVLAA. Over 114–117 the chain is Extracellular; that stretch reads GLED. The chain crosses the membrane as a helical span at residues 118 to 137; the sequence is WVDFGVICALLLLNAFVGFI. Residues 138–268 lie on the Cytoplasmic side of the membrane; the sequence is QEYQAGSIVD…GTGHFTEVLN (131 aa). Residues 269 to 290 traverse the membrane as a helical segment; sequence GIGTTLLVFVIVTLLVVWVACF. The Extracellular segment spans residues 291–301; it reads YRTVRIVPILR. The chain crosses the membrane as a helical span at residues 302–324; it reads YTLAITIIGVPVGLPAVVTTTMA. The Cytoplasmic portion of the chain corresponds to 325–696; it reads VGAAYLAKKQ…IAILNRSLDI (372 aa). The active-site 4-aspartylphosphate intermediate is the D355. Positions 611 and 615 each coordinate Mg(2+). The chain crosses the membrane as a helical span at residues 697–715; the sequence is NLIVFIAIFADVATLAIAY. Residues 716 to 731 are Extracellular-facing; the sequence is DNAPYDPKPVKWNLPR. The helical transmembrane segment at 732 to 751 threads the bilayer; that stretch reads LWGMSIVLGIILAIGTWITL. The Cytoplasmic portion of the chain corresponds to 752–801; it reads TTMLLPKGGIIQNFGGLDGILFLQISLTENWLIFVTRAQGPFWSSIPSWQ. A helical membrane pass occupies residues 802-822; the sequence is LSGAVLIVDIIATCFTLFGWW. Topologically, residues 823–834 are extracellular; it reads SQNWTDIVTVVR. The chain crosses the membrane as a helical span at residues 835-851; sequence TWIWSFGVFCVMGGAYY. The Cytoplasmic segment spans residues 852 to 895; that stretch reads LMSTSEAFDNFCNGRKPQQHTDKRSLEDFLVSMQRVSTQHEKST.

The protein belongs to the cation transport ATPase (P-type) (TC 3.A.3) family. Type IIIA subfamily.

It is found in the cell membrane. The catalysed reaction is ATP + H2O + H(+)(in) = ADP + phosphate + 2 H(+)(out). Functionally, the plasma membrane ATPase of plants and fungi is a hydrogen ion pump. The proton gradient it generates drives the active transport of nutrients by H(+)-symport. The resulting external acidification and/or internal alkinization may mediate growth responses. The sequence is that of Plasma membrane ATPase 1 (PMA1) from Candida albicans (Yeast).